A 274-amino-acid chain; its full sequence is 3-methyl-2-oxobutanoate hydroxymethyltransferase (274 aa).

The Mg(2+) site is built by Asp50 and Asp89. 3-methyl-2-oxobutanoate is bound by residues 50-51 (DS), Asp89, and Lys119. Glu121 contributes to the Mg(2+) binding site. The active-site Proton acceptor is the Glu188.

This sequence belongs to the PanB family. As to quaternary structure, homodecamer; pentamer of dimers. Mg(2+) serves as cofactor.

The protein localises to the cytoplasm. It catalyses the reaction 3-methyl-2-oxobutanoate + (6R)-5,10-methylene-5,6,7,8-tetrahydrofolate + H2O = 2-dehydropantoate + (6S)-5,6,7,8-tetrahydrofolate. The protein operates within cofactor biosynthesis; (R)-pantothenate biosynthesis; (R)-pantoate from 3-methyl-2-oxobutanoate: step 1/2. Functionally, catalyzes the reversible reaction in which hydroxymethyl group from 5,10-methylenetetrahydrofolate is transferred onto alpha-ketoisovalerate to form ketopantoate. The chain is 3-methyl-2-oxobutanoate hydroxymethyltransferase from Methylorubrum populi (strain ATCC BAA-705 / NCIMB 13946 / BJ001) (Methylobacterium populi).